Reading from the N-terminus, the 327-residue chain is Lipoyl synthase (327 aa).

Residues Cys-74, Cys-79, Cys-85, Cys-100, Cys-104, Cys-107, and Ser-314 each contribute to the [4Fe-4S] cluster site. In terms of domain architecture, Radical SAM core spans Phe-86 to Lys-303.

It belongs to the radical SAM superfamily. Lipoyl synthase family. Requires [4Fe-4S] cluster as cofactor.

Its subcellular location is the cytoplasm. It catalyses the reaction [[Fe-S] cluster scaffold protein carrying a second [4Fe-4S](2+) cluster] + N(6)-octanoyl-L-lysyl-[protein] + 2 oxidized [2Fe-2S]-[ferredoxin] + 2 S-adenosyl-L-methionine + 4 H(+) = [[Fe-S] cluster scaffold protein] + N(6)-[(R)-dihydrolipoyl]-L-lysyl-[protein] + 4 Fe(3+) + 2 hydrogen sulfide + 2 5'-deoxyadenosine + 2 L-methionine + 2 reduced [2Fe-2S]-[ferredoxin]. It functions in the pathway protein modification; protein lipoylation via endogenous pathway; protein N(6)-(lipoyl)lysine from octanoyl-[acyl-carrier-protein]: step 2/2. In terms of biological role, catalyzes the radical-mediated insertion of two sulfur atoms into the C-6 and C-8 positions of the octanoyl moiety bound to the lipoyl domains of lipoate-dependent enzymes, thereby converting the octanoylated domains into lipoylated derivatives. In Pseudomonas paraeruginosa (strain DSM 24068 / PA7) (Pseudomonas aeruginosa (strain PA7)), this protein is Lipoyl synthase.